A 445-amino-acid polypeptide reads, in one-letter code: Exodeoxyribonuclease 7 large subunit (445 aa).

It belongs to the XseA family. In terms of assembly, heterooligomer composed of large and small subunits.

The protein localises to the cytoplasm. It carries out the reaction Exonucleolytic cleavage in either 5'- to 3'- or 3'- to 5'-direction to yield nucleoside 5'-phosphates.. In terms of biological role, bidirectionally degrades single-stranded DNA into large acid-insoluble oligonucleotides, which are then degraded further into small acid-soluble oligonucleotides. This Xanthomonas oryzae pv. oryzae (strain MAFF 311018) protein is Exodeoxyribonuclease 7 large subunit.